Reading from the N-terminus, the 359-residue chain is MQTLADLLNTIPAIDPAAMSRAQRHIDGLLKPVGSLGRLEALAIQLAGMPGLNGIPHVGKKAVLVMCADHGVWEEGVAISPKEVTAIQAENMTRGTTGVCVLAAQAGANVHVIDVGIDTAEPIPGLINMRVARGSGNIASAPAMSRRQAEKLLLDVICYTRELAKNGVTLFGVGELGMANTTPAAAIVSTITGRDPEEVVGIGANLPTDKLVNKIDVVRRAIMLNQPNPQDGVDVLAKVGGFDLVGMAGVMLGAASCGLPVLLDGFLSYAAALAACQMSPAIKPYLIPSHLSAEKGARIALSHLGLEPYLNMEMRLGEGSGAALAMPIIEAACAIYNNMGELAASNIVLPGNTTSDLNS.

The Proton acceptor role is filled by Glu318.

Belongs to the CobT family. In terms of assembly, homodimer.

It catalyses the reaction 5,6-dimethylbenzimidazole + nicotinate beta-D-ribonucleotide = alpha-ribazole 5'-phosphate + nicotinate + H(+). Its pathway is nucleoside biosynthesis; alpha-ribazole biosynthesis; alpha-ribazole from 5,6-dimethylbenzimidazole: step 1/2. Functionally, catalyzes the synthesis of alpha-ribazole-5'-phosphate from nicotinate mononucleotide (NAMN) and 5,6-dimethylbenzimidazole (DMB). This chain is Nicotinate-nucleotide--dimethylbenzimidazole phosphoribosyltransferase, found in Escherichia coli O17:K52:H18 (strain UMN026 / ExPEC).